The chain runs to 145 residues: Phospholipase A2, membrane associated (145 aa).

Residues 1 to 20 (MKLLLLLLVVMASDLPQAHG) form the signal peptide. Disulfide bonds link Cys-46–Cys-138, Cys-48–Cys-64, Cys-63–Cys-118, Cys-69–Cys-145, Cys-70–Cys-111, Cys-79–Cys-104, and Cys-97–Cys-109. Residues His-47, Gly-49, and Gly-51 each coordinate Ca(2+). The active site involves His-67. Position 68 (Asp-68) interacts with Ca(2+). Residue Asp-112 is part of the active site.

Belongs to the phospholipase A2 family. Ca(2+) serves as cofactor. As to expression, alveolar macrophages, and at much lower levels in peripheral blood monocytes and peritoneal macrophages.

The protein resides in the secreted. The protein localises to the cell membrane. It is found in the mitochondrion outer membrane. It carries out the reaction a 1,2-diacyl-sn-glycero-3-phosphoethanolamine + H2O = a 1-acyl-sn-glycero-3-phosphoethanolamine + a fatty acid + H(+). The catalysed reaction is 1-hexadecanoyl-2-(9Z-octadecenoyl)-sn-glycero-3-phosphoethanolamine + H2O = 1-hexadecanoyl-sn-glycero-3-phosphoethanolamine + (9Z)-octadecenoate + H(+). It catalyses the reaction 1-hexadecanoyl-2-(9Z,12Z-octadecadienoyl)-sn-glycero-3-phosphoethanolamine + H2O = 1-hexadecanoyl-sn-glycero-3-phosphoethanolamine + (9Z,12Z)-octadecadienoate + H(+). The enzyme catalyses 1-hexadecanoyl-2-(5Z,8Z,11Z,14Z-eicosatetraenoyl)-sn-glycero-3-phosphoethanolamine + H2O = 1-hexadecanoyl-sn-glycero-3-phosphoethanolamine + (5Z,8Z,11Z,14Z)-eicosatetraenoate + H(+). It carries out the reaction N-hexadecanoyl-1,2-di-(9Z-octadecenoyl)-sn-glycero-3-phosphoethanolamine + H2O = N-hexadecanoyl-1-(9Z-octadecenoyl)-sn-glycero-3-phosphoethanolamine + (9Z)-octadecenoate + H(+). The catalysed reaction is 1,2-dihexadecanoyl-sn-glycero-3-phospho-(1'-sn-glycerol) + H2O = 1-hexadecanoyl-sn-glycero-3-phospho-(1'-sn-glycerol) + hexadecanoate + H(+). It catalyses the reaction 1-hexadecanoyl-2-(9Z-octadecenoyl)-sn-glycero-3-phosphoglycerol + H2O = 1-hexadecanoyl-sn-glycero-3-phosphoglycerol + (9Z)-octadecenoate + H(+). The enzyme catalyses 1-hexadecanoyl-2-(9Z-octadecenoyl)-sn-glycero-3-phospho-(1'-sn-glycerol) + H2O = 1-hexadecanoyl-sn-glycero-3-phospho-(1'-sn-glycerol) + (9Z)-octadecenoate + H(+). It carries out the reaction a 1,2-diacyl-sn-glycero-3-phosphocholine + H2O = a 1-acyl-sn-glycero-3-phosphocholine + a fatty acid + H(+). The catalysed reaction is 1,2-dihexadecanoyl-sn-glycero-3-phosphocholine + H2O = 1-hexadecanoyl-sn-glycero-3-phosphocholine + hexadecanoate + H(+). It catalyses the reaction 1-hexadecanoyl-2-(9Z-octadecenoyl)-sn-glycero-3-phosphocholine + H2O = 1-hexadecanoyl-sn-glycero-3-phosphocholine + (9Z)-octadecenoate + H(+). The enzyme catalyses 1-hexadecanoyl-2-(9Z,12Z-octadecadienoyl)-sn-glycero-3-phosphocholine + H2O = (9Z,12Z)-octadecadienoate + 1-hexadecanoyl-sn-glycero-3-phosphocholine + H(+). It carries out the reaction 1-hexadecanoyl-2-(4Z,7Z,10Z,13Z,16Z,19Z-docosahexaenoyl)-sn-glycero-3-phosphocholine + H2O = (4Z,7Z,10Z,13Z,16Z,19Z)-docosahexaenoate + 1-hexadecanoyl-sn-glycero-3-phosphocholine + H(+). Secretory calcium-dependent phospholipase A2 that primarily targets extracellular phospholipids with implications in host antimicrobial defense, inflammatory response and tissue regeneration. Hydrolyzes the ester bond of the fatty acyl group attached at sn-2 position of phospholipids (phospholipase A2 activity) with preference for phosphatidylethanolamines and phosphatidylglycerols over phosphatidylcholines. Contributes to lipid remodeling of cellular membranes and generation of lipid mediators involved in pathogen clearance. Displays bactericidal activity against Gram-positive bacteria by directly hydrolyzing phospholipids of the bacterial membrane. Upon sterile inflammation, targets membrane phospholipids of extracellular mitochondria released from activated platelets, generating free unsaturated fatty acids such as arachidonate that is used by neighboring leukocytes to synthesize inflammatory eicosanoids such as leukotrienes. Simultaneously, by compromising mitochondrial membrane integrity, promotes the release in circulation of potent damage-associated molecular pattern molecules that activate the innate immune response. Plays a stem cell regulator role in the intestinal crypt. Within intracellular compartment mediates Paneth cell differentiation and its stem cell supporting functions by inhibiting Wnt signaling pathway in intestinal stem cell (ICS). Secreted in the intestinal lumen upon inflammation, acts in an autocrine way and promotes prostaglandin E2 synthesis that stimulates Wnt signaling pathway in ICS cells and tissue regeneration. May play a role in the biosynthesis of N-acyl ethanolamines that regulate energy metabolism and inflammation. Hydrolyzes N-acyl phosphatidylethanolamines to N-acyl lysophosphatidylethanolamines, which are further cleaved by a lysophospholipase D to release N-acyl ethanolamines. Independent of its catalytic activity, acts as a ligand for integrins. Binds to and activates integrins ITGAV:ITGB3, ITGA4:ITGB1 and ITGA5:ITGB1. Binds to a site (site 2) which is distinct from the classical ligand-binding site (site 1) and induces integrin conformational changes and enhanced ligand binding to site 1. Induces cell proliferation in an integrin-dependent manner. The sequence is that of Phospholipase A2, membrane associated (PLA2G2A) from Cavia porcellus (Guinea pig).